We begin with the raw amino-acid sequence, 246 residues long: UDP-2,3-diacylglucosamine hydrolase (246 aa).

Mn(2+) contacts are provided by D8, H10, D41, N79, and H114. 79 to 80 (NR) serves as a coordination point for substrate. The substrate site is built by D122, S160, N164, K167, and H195. The Mn(2+) site is built by H195 and H197.

It belongs to the LpxH family. It depends on Mn(2+) as a cofactor.

The protein localises to the cell inner membrane. The enzyme catalyses UDP-2-N,3-O-bis[(3R)-3-hydroxytetradecanoyl]-alpha-D-glucosamine + H2O = 2-N,3-O-bis[(3R)-3-hydroxytetradecanoyl]-alpha-D-glucosaminyl 1-phosphate + UMP + 2 H(+). The protein operates within glycolipid biosynthesis; lipid IV(A) biosynthesis; lipid IV(A) from (3R)-3-hydroxytetradecanoyl-[acyl-carrier-protein] and UDP-N-acetyl-alpha-D-glucosamine: step 4/6. Hydrolyzes the pyrophosphate bond of UDP-2,3-diacylglucosamine to yield 2,3-diacylglucosamine 1-phosphate (lipid X) and UMP by catalyzing the attack of water at the alpha-P atom. Involved in the biosynthesis of lipid A, a phosphorylated glycolipid that anchors the lipopolysaccharide to the outer membrane of the cell. This chain is UDP-2,3-diacylglucosamine hydrolase, found in Chromohalobacter salexigens (strain ATCC BAA-138 / DSM 3043 / CIP 106854 / NCIMB 13768 / 1H11).